The chain runs to 283 residues: Adenosyl-chloride synthase (283 aa).

Substrate is bound by residues D11, 70 to 72 (YVY), and 128 to 131 (TWYG). G131 provides a ligand contact to chloride.

The protein belongs to the SAM hydrolase / SAM-dependent halogenase family. As to quaternary structure, homotrimer.

It catalyses the reaction chloride + S-adenosyl-L-methionine = 5'-chloro-5'-deoxyadenosine + L-methionine. Functionally, involved in the biosynthesis of the proteosome inhibitor salinosporamide A (SalA). Catalyzes the halogenation of S-adenosyl-L-methionine (SAM) with chloride to generate 5'-chloro-5'-deoxyadenosine (5'-CIDA) and L-methionine. It can also use bromide and iodide, producing halogenated 5'-deoxyadenosine (5'-XDA) and L-methionine, however no halogenase activity is detected in the presence of fluoride. This chain is Adenosyl-chloride synthase, found in Salinispora tropica (strain ATCC BAA-916 / DSM 44818 / JCM 13857 / NBRC 105044 / CNB-440).